The following is a 489-amino-acid chain: Probable anthranilate synthase component 1 (489 aa).

Residues Ser-54 and 262–264 (PYM) each bind L-tryptophan. 297-298 (GT) is a chorismate binding site. A Mg(2+)-binding site is contributed by Glu-324. Phosphoserine is present on residues Ser-390 and Ser-392. Residues Tyr-412, Arg-433, 447-449 (GGG), and Gly-449 contribute to the chorismate site. Glu-462 contributes to the Mg(2+) binding site. Position 488 is a phosphoserine (Ser-488).

This sequence belongs to the anthranilate synthase component I family. In terms of assembly, tetramer of two components I and two components II. The cofactor is Mg(2+).

It carries out the reaction chorismate + L-glutamine = anthranilate + pyruvate + L-glutamate + H(+). The protein operates within amino-acid biosynthesis; L-tryptophan biosynthesis; L-tryptophan from chorismate: step 1/5. In Schizosaccharomyces pombe (strain 972 / ATCC 24843) (Fission yeast), this protein is Probable anthranilate synthase component 1 (trp3).